The sequence spans 481 residues: 3-isopropylmalate dehydratase large subunit (481 aa).

Residues Cys363, Cys423, and Cys426 each contribute to the [4Fe-4S] cluster site. The segment at 434 to 465 is disordered; the sequence is LRPGQRAASTSNRNFEGRQGRGGRTHLVSPPV.

It belongs to the aconitase/IPM isomerase family. LeuC type 1 subfamily. As to quaternary structure, heterodimer of LeuC and LeuD. The cofactor is [4Fe-4S] cluster.

It catalyses the reaction (2R,3S)-3-isopropylmalate = (2S)-2-isopropylmalate. It participates in amino-acid biosynthesis; L-leucine biosynthesis; L-leucine from 3-methyl-2-oxobutanoate: step 2/4. In terms of biological role, catalyzes the isomerization between 2-isopropylmalate and 3-isopropylmalate, via the formation of 2-isopropylmaleate. This chain is 3-isopropylmalate dehydratase large subunit, found in Salinispora tropica (strain ATCC BAA-916 / DSM 44818 / JCM 13857 / NBRC 105044 / CNB-440).